We begin with the raw amino-acid sequence, 291 residues long: Glycine--tRNA ligase alpha subunit (291 aa).

The protein belongs to the class-II aminoacyl-tRNA synthetase family. Tetramer of two alpha and two beta subunits.

Its subcellular location is the cytoplasm. The catalysed reaction is tRNA(Gly) + glycine + ATP = glycyl-tRNA(Gly) + AMP + diphosphate. This is Glycine--tRNA ligase alpha subunit from Coprothermobacter proteolyticus (strain ATCC 35245 / DSM 5265 / OCM 4 / BT).